A 251-amino-acid polypeptide reads, in one-letter code: Imidazole glycerol phosphate synthase subunit HisF (251 aa).

Catalysis depends on residues Asp-11 and Asp-130.

The protein belongs to the HisA/HisF family. Heterodimer of HisH and HisF.

It is found in the cytoplasm. It carries out the reaction 5-[(5-phospho-1-deoxy-D-ribulos-1-ylimino)methylamino]-1-(5-phospho-beta-D-ribosyl)imidazole-4-carboxamide + L-glutamine = D-erythro-1-(imidazol-4-yl)glycerol 3-phosphate + 5-amino-1-(5-phospho-beta-D-ribosyl)imidazole-4-carboxamide + L-glutamate + H(+). It functions in the pathway amino-acid biosynthesis; L-histidine biosynthesis; L-histidine from 5-phospho-alpha-D-ribose 1-diphosphate: step 5/9. Functionally, IGPS catalyzes the conversion of PRFAR and glutamine to IGP, AICAR and glutamate. The HisF subunit catalyzes the cyclization activity that produces IGP and AICAR from PRFAR using the ammonia provided by the HisH subunit. This Natranaerobius thermophilus (strain ATCC BAA-1301 / DSM 18059 / JW/NM-WN-LF) protein is Imidazole glycerol phosphate synthase subunit HisF.